The sequence spans 233 residues: Translation initiation factor IF-3 (233 aa).

Disordered stretches follow at residues methionine 1–arginine 21 and leucine 184–arginine 233. The segment covering alanine 193 to proline 211 has biased composition (low complexity). A compositionally biased stretch (pro residues) spans alanine 212 to alanine 223. Residues proline 224–arginine 233 show a composition bias toward low complexity.

This sequence belongs to the IF-3 family. Monomer.

Its subcellular location is the cytoplasm. In terms of biological role, IF-3 binds to the 30S ribosomal subunit and shifts the equilibrium between 70S ribosomes and their 50S and 30S subunits in favor of the free subunits, thus enhancing the availability of 30S subunits on which protein synthesis initiation begins. The polypeptide is Translation initiation factor IF-3 (Anaeromyxobacter dehalogenans (strain 2CP-C)).